The sequence spans 226 residues: Exosome complex component Rrp4 (226 aa).

Positions asparagine 61–arginine 135 constitute an S1 motif domain. The KH domain maps to aspartate 141–isoleucine 200.

This sequence belongs to the RRP4 family. Component of the archaeal exosome complex. Forms a trimer of Rrp4 and/or Csl4 subunits. The trimer associates with a hexameric ring-like arrangement composed of 3 Rrp41-Rrp42 heterodimers.

The protein resides in the cytoplasm. Functionally, non-catalytic component of the exosome, which is a complex involved in RNA degradation. Increases the RNA binding and the efficiency of RNA degradation. Confers strong poly(A) specificity to the exosome. This Nitrosopumilus maritimus (strain SCM1) protein is Exosome complex component Rrp4.